Here is a 258-residue protein sequence, read N- to C-terminus: MENTATAPNAKLEVKNLNFYYGKFHAIRNVNMSIRENKVTAFIGPSGCGKSTLLRTFNRMFELYPGQRAEGEILLDGENLLTSKTDISLIRAKVGMVFQKPTPFPMSIYDNIAFGVRLFERLSKGEMDERVEWALSKAALWNEVKDKLHQSGNSLSGGQQQRLCIARGVAIKPEVLLLDEPCSALDPISTAKIEELIAELKHEYTVVIVTHNMQQAARCSDYTAYMYLGELMEYGATDQIFVKPARKETEDYITGRFG.

The region spanning 12-253 (LEVKNLNFYY…PARKETEDYI (242 aa)) is the ABC transporter domain. 44-51 (GPSGCGKS) provides a ligand contact to ATP.

Belongs to the ABC transporter superfamily. Phosphate importer (TC 3.A.1.7) family. The complex is composed of two ATP-binding proteins (PstB), two transmembrane proteins (PstC and PstA) and a solute-binding protein (PstS).

The protein resides in the cell inner membrane. The enzyme catalyses phosphate(out) + ATP + H2O = ADP + 2 phosphate(in) + H(+). Functionally, part of the ABC transporter complex PstSACB involved in phosphate import. Responsible for energy coupling to the transport system. The protein is Phosphate import ATP-binding protein PstB of Bordetella parapertussis (strain 12822 / ATCC BAA-587 / NCTC 13253).